Consider the following 322-residue polypeptide: Prephenate dehydratase (322 aa).

Residues 5-191 enclose the Prephenate dehydratase domain; that stretch reads RIAYLGPEGT…ARTRFVLVGM (187 aa). The ACT domain maps to 205–282; the sequence is SAVLRIDNAP…ADVCYLGSWP (78 aa). A disordered region spans residues 286 to 322; the sequence is ATGPTVSPPPPDEASRWLARLRAGKPDQASEPGGGKL.

Homodimer.

It carries out the reaction prephenate + H(+) = 3-phenylpyruvate + CO2 + H2O. The protein operates within amino-acid biosynthesis; L-phenylalanine biosynthesis; phenylpyruvate from prephenate: step 1/1. In Mycobacterium leprae (strain Br4923), this protein is Prephenate dehydratase (pheA).